Consider the following 173-residue polypeptide: Translation initiation factor IF-3 (173 aa).

The protein belongs to the IF-3 family. As to quaternary structure, monomer.

The protein localises to the cytoplasm. In terms of biological role, IF-3 binds to the 30S ribosomal subunit and shifts the equilibrium between 70S ribosomes and their 50S and 30S subunits in favor of the free subunits, thus enhancing the availability of 30S subunits on which protein synthesis initiation begins. The sequence is that of Translation initiation factor IF-3 from Parvibaculum lavamentivorans (strain DS-1 / DSM 13023 / NCIMB 13966).